The following is a 24-amino-acid chain: Positive regulator of RepFIC repA1 expression (24 aa).

The polypeptide is Positive regulator of RepFIC repA1 expression (repL) (Escherichia coli (strain K12)).